Here is a 93-residue protein sequence, read N- to C-terminus: UPF0728 protein C10orf53 homolog (93 aa).

It belongs to the UPF0728 family.

The chain is UPF0728 protein C10orf53 homolog from Mus musculus (Mouse).